The chain runs to 46 residues: Small, acid-soluble spore protein N (46 aa).

The interval 1–46 (MAKMKHGSAQFRPDHLGTQPRKSDANKGKKMNTKGNENPQYIPPKG) is disordered.

The protein belongs to the SspN family.

The protein resides in the spore core. The protein is Small, acid-soluble spore protein N of Halalkalibacterium halodurans (strain ATCC BAA-125 / DSM 18197 / FERM 7344 / JCM 9153 / C-125) (Bacillus halodurans).